The primary structure comprises 303 residues: Ribonuclease HIII (303 aa).

In terms of domain architecture, RNase H type-2 spans 85 to 302 (CSLIGSDEVG…TKKAYQLLKK (218 aa)). A divalent metal cation-binding residues include Asp-91, Glu-92, and Asp-196.

The protein belongs to the RNase HII family. RnhC subfamily. Mn(2+) serves as cofactor. The cofactor is Mg(2+).

It localises to the cytoplasm. The enzyme catalyses Endonucleolytic cleavage to 5'-phosphomonoester.. In terms of biological role, endonuclease that specifically degrades the RNA of RNA-DNA hybrids. This is Ribonuclease HIII from Streptococcus mutans serotype c (strain ATCC 700610 / UA159).